Reading from the N-terminus, the 296-residue chain is N-acetylmuramic acid 6-phosphate etherase (296 aa).

The SIS domain maps to 54–217 (VTESFRKGGR…STTSMVGIGK (164 aa)). The active-site Proton donor is Glu-82. Glu-113 is a catalytic residue.

This sequence belongs to the GCKR-like family. MurNAc-6-P etherase subfamily. Homodimer.

It carries out the reaction N-acetyl-D-muramate 6-phosphate + H2O = N-acetyl-D-glucosamine 6-phosphate + (R)-lactate. The protein operates within amino-sugar metabolism; N-acetylmuramate degradation. Its function is as follows. Specifically catalyzes the cleavage of the D-lactyl ether substituent of MurNAc 6-phosphate, producing GlcNAc 6-phosphate and D-lactate. This chain is N-acetylmuramic acid 6-phosphate etherase, found in Listeria welshimeri serovar 6b (strain ATCC 35897 / DSM 20650 / CCUG 15529 / CIP 8149 / NCTC 11857 / SLCC 5334 / V8).